Reading from the N-terminus, the 129-residue chain is 3-aminoacrylate deaminase RutC (129 aa).

Belongs to the RutC family.

It catalyses the reaction (Z)-3-aminoacrylate + H2O + H(+) = 3-oxopropanoate + NH4(+). Its function is as follows. Involved in pyrimidine catabolism. Catalyzes the deamination of 3-aminoacrylate to malonic semialdehyde, a reaction that can also occur spontaneously. RutC may facilitate the reaction and modulate the metabolic fitness, rather than catalyzing essential functions. The chain is 3-aminoacrylate deaminase RutC from Caulobacter vibrioides (strain ATCC 19089 / CIP 103742 / CB 15) (Caulobacter crescentus).